Here is a 1171-residue protein sequence, read N- to C-terminus: Pyruvate:ferredoxin oxidoreductase (1171 aa).

Residues Thr-29 and Arg-112 each coordinate pyruvate. CoA contacts are provided by residues 424–428, Lys-456, Asn-556, and Asn-598; that span reads SDGTV. 4Fe-4S ferredoxin-type domains lie at 677–706 and 733–764; these read NIPQ…PYLA and FRIQ…MVPL. Cys-686, Cys-689, Cys-692, Cys-696, Cys-742, Cys-745, Cys-748, Cys-752, Cys-809, and Cys-812 together coordinate [4Fe-4S] cluster. Thiamine diphosphate contacts are provided by residues Glu-814, Cys-837, 967 to 969, and 995 to 1000; these read DGW and TEVYSN. Position 837 (Cys-837) interacts with [4Fe-4S] cluster. 3 residues coordinate Mg(2+): Asp-967, Thr-995, and Val-997. Asn-1000 serves as a coordination point for pyruvate. Cys-1075 serves as a coordination point for [4Fe-4S] cluster.

It belongs to the pyruvate:ferredoxin/flavodoxin oxidoreductase family. As to quaternary structure, homodimer. [4Fe-4S] cluster serves as cofactor. Thiamine diphosphate is required as a cofactor. The cofactor is Mg(2+).

The enzyme catalyses 2 oxidized [2Fe-2S]-[ferredoxin] + pyruvate + CoA = 2 reduced [2Fe-2S]-[ferredoxin] + acetyl-CoA + CO2 + H(+). In terms of biological role, catalyzes the oxidative decarboxylation of pyruvate to acetyl-CoA and carbon dioxide. The two electrons that are generated as a result of pyruvate decarboxylation are used in the reduction of low potential ferredoxins, which provide reducing equivalents for central metabolism. Also catalyzes the reverse reaction, i.e. the synthesis of pyruvate from acetyl-CoA and carbon dioxide. Appears to function physiologically in both directions. The oxidation of pyruvate by PFOR is required to connect glycolysis and the Wood-Ljungdahl pathway of reductive acetogenesis. The conversion of acetyl-CoA to pyruvate links the Wood-Ljungdahl pathway of autotrophic CO2 fixation to the reductive tricarboxylic acid cycle. Can use methyl viologen as electron carrier in vitro. In Moorella thermoacetica (strain ATCC 39073 / JCM 9320), this protein is Pyruvate:ferredoxin oxidoreductase.